The primary structure comprises 559 residues: AP-4 complex accessory subunit tepsin (559 aa).

The 134-residue stretch at 2 to 135 folds into the ENTH domain; the sequence is LDRLAFLQQL…FSESIPSPSH (134 aa). Disordered regions lie at residues 131 to 157, 214 to 290, and 472 to 491; these read PSPSHTVSAKERSQSGMGSQASSAPAL, AIPS…ESLD, and PNGAANQKNPNGSTEKSDPA. 2 stretches are compositionally biased toward low complexity: residues 144–154 and 266–281; these read QSGMGSQASSA and SRSSDVGSKSGSDGQS. Residues 472 to 485 show a composition bias toward polar residues; that stretch reads PNGAANQKNPNGST.

It is found in the golgi apparatus. It localises to the trans-Golgi network membrane. Its subcellular location is the cytoplasmic vesicle. The protein resides in the cytoplasm. The protein localises to the cytosol. In terms of biological role, may play a role in vesicular trafficking of proteins at the trans-Golgi network. This Xenopus laevis (African clawed frog) protein is AP-4 complex accessory subunit tepsin.